A 450-amino-acid polypeptide reads, in one-letter code: UDP-N-acetylglucosamine--peptide N-acetylglucosaminyltransferase stabilizing protein GtfB (450 aa).

Belongs to the GtfB family. Forms a heterotetramer with 2 subunits each of GtfA and GtfB. Part of the accessory SecA2/SecY2 protein translocation apparatus required to export cell wall protein GspB.

It is found in the cell membrane. It participates in protein modification; protein glycosylation. Functionally, required for polymorphic O-glycosylation of GspB, a serine-rich repeat cell wall protein encoded upstream in the same operon. A substrate-binding protein that is part of the accessory SecA2/SecY2 system specifically required to export GspB. The GtfA-GtfB complex adds GlcNAc from UDP-GlcNAc to GspB, attaching the first sugar residue. Upon coexpression in E.coli with GtfA glycosylates GspB constructs. Binds the GspB protein substrate; alone this subunit only recognizes partially glycosylated GspB, but is constrained by GtfA to also recognize unglycosylated protein. The enzyme probably modifies its tertiary conformation by opening and closing its intersubunit interfaces to accomodate the increasingly glycosylated substrate. This chain is UDP-N-acetylglucosamine--peptide N-acetylglucosaminyltransferase stabilizing protein GtfB, found in Streptococcus gordonii.